The chain runs to 239 residues: Small ribosomal subunit protein uS5 (239 aa).

Residues 1-62 form a disordered region; that stretch reads MADETEIQAA…DDRRGSEEQG (62 aa). The segment covering 9 to 19 has biased composition (low complexity); the sequence is AAAPAEAAPGA. Residues 34–62 show a composition bias toward basic and acidic residues; it reads GGNDRGGDRGRGRDGRGRRDDRRGSEEQG. The S5 DRBM domain maps to 65 to 128; sequence LIEKLVHINR…AAAKKAMVRV (64 aa).

The protein belongs to the universal ribosomal protein uS5 family. In terms of assembly, part of the 30S ribosomal subunit. Contacts proteins S4 and S8.

In terms of biological role, with S4 and S12 plays an important role in translational accuracy. Its function is as follows. Located at the back of the 30S subunit body where it stabilizes the conformation of the head with respect to the body. This Rhizorhabdus wittichii (strain DSM 6014 / CCUG 31198 / JCM 15750 / NBRC 105917 / EY 4224 / RW1) (Sphingomonas wittichii) protein is Small ribosomal subunit protein uS5.